Here is a 477-residue protein sequence, read N- to C-terminus: POC1 centriolar protein homolog B (477 aa).

WD repeat units lie at residues 16–55, 58–97, 100–139, 142–181, 183–223, 226–265, and 268–307; these read GHKAAITSADFSPNCKQIATASWDTFLMLWSLKPHARAYR, GHKDVVTSLQFSPQGNLLASASRDKTVRLWVLDRKGKSSE, AHTAPVRSVDFSADGQFLVTASEDKSIKVWSMYRQRFLYS, RHTHWVRCAKFSPDGRLIVSCSEDKTIKIWDTTSKQCVNN, SDSV…LLQH, VHSCGVNCLSFHPSGNSLVTASSDGTVKILDLVEGRLIYT, and GHTGPVFTVSFSKDGELFTSGGADAQVLVWRTSFNQVHYR. Residues 449-469 adopt a coiled-coil conformation; sequence EQRLSLTEDKLKDCLENQQKL.

This sequence belongs to the WD repeat POC1 family. In terms of assembly, interacts with POC1A. Interacts with FAM161A. Interacts with CEP44; the interaction is direct and recruits POC1B to centriolar microtubules. Forms a microtubule-associated complex with POC5, CETN2 and FAM161A. Interacts with CCDC15. In terms of processing, phosphorylated in mitotic cells that may be mediated by CDK1.

It is found in the cytoplasm. The protein resides in the cytoskeleton. It localises to the microtubule organizing center. The protein localises to the centrosome. Its subcellular location is the centriole. It is found in the cilium basal body. The protein resides in the spindle pole. In terms of biological role, plays an important role in centriole assembly and/or stability and ciliogenesis. Involved in early steps of centriole duplication, as well as in the later steps of centriole length control. Acts in concert with POC1A to ensure centriole integrity and proper mitotic spindle formation. Required for primary cilia formation, ciliary length and also cell proliferation. Required for retinal integrity. Acts as a positive regulator of centriole elongation. The polypeptide is POC1 centriolar protein homolog B (Poc1b) (Rattus norvegicus (Rat)).